A 512-amino-acid polypeptide reads, in one-letter code: Circadian clock oscillator protein KaiC (512 aa).

KaiC domains lie at 1-243 (MQFP…ISIF) and 257-512 (VRVS…SSED). Positions 45, 46, 47, 48, 49, 85, 220, 221, 222, 224, 226, 286, 287, 288, 289, 290, 291, and 292 each coordinate ATP. A Mg(2+)-binding site is contributed by T49. Position 291 (T291) interacts with Mg(2+). E314 provides a ligand contact to Mg(2+). An ATP-binding site is contributed by W327. The residue at position 427 (S427) is a Phosphoserine; by autocatalysis. Residue T428 is modified to Phosphothreonine; by autocatalysis. Residues R447, K453, M454, R455, S457, H459, and K461 each contribute to the ATP site.

This sequence belongs to the KaiC family. As to quaternary structure, homohexamer; hexamerization is dependent on ATP-binding. The KaiABC complex composition changes during the circadian cycle to control KaiC phosphorylation. Complexes KaiC(6), KaiA(2-4):KaiC(6), KaiB(6):KaiC(6) and KaiC(6):KaiB(6):KaiA(12) are among the most important forms, many form cooperatively. KaiC interacts with SasA, activating its autokinase function and leading to RpaA activation. The cofactor is Mg(2+). Post-translationally, phosphorylated on serine and threonine residues by autocatalysis. Has a 4 step phosphorylation cycle; the autokinase acts first on Thr-428, then Ser-427. When Ser-427 is modified KaiC switches to an autophosphatase mode, acting first on phospho-Thr-428 then phospho-Ser-427.

It carries out the reaction L-seryl-[protein] + ATP = O-phospho-L-seryl-[protein] + ADP + H(+). The catalysed reaction is L-threonyl-[protein] + ATP = O-phospho-L-threonyl-[protein] + ADP + H(+). The enzyme catalyses ATP + H2O = ADP + phosphate + H(+). Its activity is regulated as follows. The interaction with KaiA enhances its phosphorylation status, while the interaction with KaiB decreases it. Central component of the KaiABC oscillator complex, which constitutes the main circadian regulator in cyanobacteria. Complex composition changes during the circadian cycle to control KaiC phosphorylation. KaiA stimulates KaiC autophosphorylation, while KaiB sequesters KaiA, leading to KaiC autodephosphorylation. Clock output pathways impact the RpaA transcriptional regulator. KaiC enhances the autophosphorylation activity of SasA, which then transfers its phosphate group to RpaA to activate it. KaiB and KaiC together enhance the phospho-RpaA dephosphatase activity of CikA. Its function is as follows. Has a weak, temperature-independent ATPase activity; ATPase activity defines the circadian period. The phosphorylation state of KaiC modulates its ATPase activity and effects KaiB binding. In Parasynechococcus marenigrum (strain WH8102), this protein is Circadian clock oscillator protein KaiC.